A 433-amino-acid chain; its full sequence is MSKKLFIQTLGCAMNVRDSEHIIAELSQKEDYTLTQNLEEADLILINTCSVREKPVHKLFSEVGAFEKAKKNGAKIGVCGCTASHLGDEIFKRAPYVDFVLGARNVSKISTAVKTPKFISTDINHDESEYAFGEFRGSPYKSHINISIGCDKKCTYCIVPHTRGDEISIPANLILREVEKAATNGAKEIFLLGQNVNNYGKRFSGAHEKIDFSDLLVRISEVAGVERIRFTSPHPLHMDDKFLEIFSQNPKICKSMHMPLQSGNTKVLREMKRGYTKEWFLDRAAKLREMCPDVSISTDIIVAFPGESDAEFEDTMDVLERVKFEQIFSFKYSPRPMTKAAEFTNQIDEATASARLTRLQSRHNEILDEIVAAQEGKILDVYFEELRANGGVAGRSFNNFLVQVNGSEELLGRTLKVKITDTKRMVLYGELAN.

In terms of domain architecture, MTTase N-terminal spans 3–118; that stretch reads KKLFIQTLGC…ISTAVKTPKF (116 aa). [4Fe-4S] cluster is bound by residues C12, C49, C81, C150, C154, and C157. In terms of domain architecture, Radical SAM core spans 136 to 369; it reads RGSPYKSHIN…QSRHNEILDE (234 aa). The region spanning 372 to 433 is the TRAM domain; sequence AAQEGKILDV…RMVLYGELAN (62 aa).

This sequence belongs to the methylthiotransferase family. MiaB subfamily. As to quaternary structure, monomer. It depends on [4Fe-4S] cluster as a cofactor.

It is found in the cytoplasm. It carries out the reaction N(6)-dimethylallyladenosine(37) in tRNA + (sulfur carrier)-SH + AH2 + 2 S-adenosyl-L-methionine = 2-methylsulfanyl-N(6)-dimethylallyladenosine(37) in tRNA + (sulfur carrier)-H + 5'-deoxyadenosine + L-methionine + A + S-adenosyl-L-homocysteine + 2 H(+). In terms of biological role, catalyzes the methylthiolation of N6-(dimethylallyl)adenosine (i(6)A), leading to the formation of 2-methylthio-N6-(dimethylallyl)adenosine (ms(2)i(6)A) at position 37 in tRNAs that read codons beginning with uridine. In Campylobacter curvus (strain 525.92), this protein is tRNA-2-methylthio-N(6)-dimethylallyladenosine synthase.